We begin with the raw amino-acid sequence, 1604 residues long: Collagen alpha-1(XVI) chain (1604 aa).

The N-terminal stretch at 1–21 (MWVSWAPGLWLLGLWATFGHG) is a signal peptide. Asparagine 47 is a glycosylation site (N-linked (GlcNAc...) asparagine). The 182-residue stretch at 50-231 (GFNLIHRLSL…LQQVHIYCDP (182 aa)) folds into the Laminin G-like domain. The segment at 232-374 (ELVLEEGCCE…SPDAPLQCAE (143 aa)) is nonhelical region 10 (NC10). The span at 301–311 (AERGAKVHQET) shows a compositional bias: basic and acidic residues. Positions 301–509 (AERGAKVHQE…KGEKGDPCEV (209 aa)) are disordered. An N-linked (GlcNAc...) asparagine glycan is attached at asparagine 327. The region spanning 375 to 423 (GPKGEKGESGALGPSGLPGSTGEKGQKGEKGDGGIKGVPGKPGRDGRPG) is the Collagen-like 1 domain. The interval 375 to 506 (GPKGEKGESG…PGVKGEKGDP (132 aa)) is triple-helical region 9 (COL9) with 3 imperfections. Low complexity predominate over residues 383 to 397 (SGALGPSGLPGSTGE). A compositionally biased stretch (basic and acidic residues) spans 398–407 (KGQKGEKGDG). Residues 449-460 (PGPPGLPGPPGI) show a composition bias toward pro residues. A compositionally biased stretch (gly residues) spans 486–495 (GKEGPGGKPG). Residues 507-521 (CEVCPTLPEGFQNFV) form a nonhelical region 9 (NC9) region. Residues 522 to 555 (GLPGKPGPKGEPGDPVPARGDPGIQGIKGEKGEP) are triple-helical region 8 (COL8) with 1 imperfection. The Cell attachment site signature appears at 540-542 (RGD). The nonhelical region 8 (NC8) stretch occupies residues 556-572 (CLSCSSVVGAQHLVSST). Residues 573–631 (GASGDVGSPGFGLPGLPGRAGVPGLKGEKGNFGEAGPAGSPGPPGPVGPAGIKGAKGEP) form a triple-helical region 7 (COL7) with 1 imperfection region. Collagen-like domains follow at residues 573-633 (GASG…EPCE) and 667-721 (GLPG…GEKG). The segment at 604–917 (FGEAGPAGSP…PPGIPGPPGP (314 aa)) is disordered. The segment at 632 to 652 (CEPCPALSNLQDGDVRVVALP) is nonhelical region 7 (NC7). The tract at residues 653–723 (GPSGEKGEPG…AGPKGEKGDG (71 aa)) is triple-helical region 6 (COL6) with 1 imperfection. Residues 674 to 684 (KAGERGLKGQK) show a composition bias toward basic and acidic residues. Residues 686 to 702 (DAGNPGDPGTPGTTGRP) show a composition bias toward low complexity. Residues 724 to 738 (CTACPSLQGTVTDMA) form a nonhelical region 6 (NC6) region. Residues 739 to 876 (GRPGQPGPKG…RGEKGEPGEC (138 aa)) form a triple-helical region 5 (COL5) with 3 imperfections region. 3 stretches are compositionally biased toward low complexity: residues 766–781 (LPGV…VQGE), 792–808 (PQGE…QGLP), and 826–846 (PGVK…SGPP). Residues 788–840 (GVQGPQGEPGAPGLPGIQGLPGPRGPPGPTGEKGAQGSPGVKGATGPVGPPGA) form the Collagen-like 4 domain. Basic and acidic residues predominate over residues 864 to 873 (KGPRGEKGEP). Positions 877–887 (SCPSQGDLIFS) are nonhelical region 5 (NC5). The region spanning 888–938 (GMPGAPGLWMGSSWQPGPQGPPGIPGPPGPPGVPGLQGVPGNNGLPGQPGL) is the Collagen-like 5 domain. The tract at residues 888–939 (GMPGAPGLWMGSSWQPGPQGPPGIPGPPGPPGVPGLQGVPGNNGLPGQPGLT) is triple-helical region 4 (COL4) with 2 imperfections. Residues 905–917 (PQGPPGIPGPPGP) are compositionally biased toward pro residues. The interval 940 to 973 (AELGSLPIEQHLLKSICGDCVQGQRAHPGYLVEK) is nonhelical region 4 (NC4). Residues 974-988 (GEKGDQGIPGVPGLD) form a triple-helical region 3 (COL3) region. The segment at 989–1011 (NCAQCFLSLERPRAEEARGDNSE) is nonhelical region 3 (NC3). Disordered regions lie at residues 1001 to 1429 (RAEE…VPGS) and 1468 to 1517 (MAAA…PGTK). Residues 1006–1008 (RGD) carry the Cell attachment site motif. Residues 1012-1433 (GDPGCVGSPG…PGVPGSMGDM (422 aa)) form a triple-helical region 2 (COL2) with 2 imperfections region. A Collagen-like 6 domain is found at 1018 to 1075 (GSPGLPGPPGLPGQRGEEGPPGMRGSPGPPGPIGPPGFPGAVGSPGLPGLQGERGLTG). 3 stretches are compositionally biased toward pro residues: residues 1044 to 1055 (PGPPGPIGPPGF), 1160 to 1169 (FPGPPGPPGF), and 1199 to 1208 (SPGPPGPPGI). The segment covering 1217–1226 (LDGKDGKPGL) has biased composition (basic and acidic residues). Residues 1227-1229 (RGD) carry the Cell attachment site motif. Residues 1271–1284 (RPGAEGEPGAMGPQ) show a composition bias toward low complexity. 2 stretches are compositionally biased toward pro residues: residues 1286–1302 (RPGP…PGQP) and 1330–1342 (QPGP…PPGE). Residues 1369–1378 (DPGAAGQKGQ) show a composition bias toward low complexity. A compositionally biased stretch (gly residues) spans 1386 to 1395 (GMPGGPGKSG). Low complexity predominate over residues 1420-1429 (SPGLPGVPGS). A nonhelical region 2 (NC2) region spans residues 1434–1472 (VNYDEIKRFIRQEIIKMFDERMAYYTSRMQFPMEMAAAP). Collagen-like domains are found at residues 1472-1524 (PGRP…GDIG) and 1528-1576 (AGEN…GKAG). Positions 1473–1578 (GRPGPPGKDG…MGQPGKAGHC (106 aa)) are triple-helical region 1 (COL1) with 2 imperfections. A nonhelical region 1 (NC1) region spans residues 1579–1604 (NPSDCFGAMPMEQQYPPMKTMKGPFG).

This sequence belongs to the fibril-associated collagens with interrupted helices (FACIT) family. As to quaternary structure, homotrimer. Interacts with FBN1, fibronectin and integrins ITGA1/ITGB1 and ITGA2/ITGB1. Integrin ITGA1/ITGB1 binds to a unique site within COL16A1 located close to its C-terminal end between collagenous domains COL1-COL3. Post-translationally, prolines at the third position of the tripeptide repeating unit (G-X-Y) are hydroxylated in some or all of the chains. In terms of processing, glycosylated. In papillary dermis, is a component of specialized fibrillin-1-containing microfibrils, whereas in territorial cartilage matrix, it is localized to a discrete population of thin, weakly banded collagen fibrils in association with other collagens (at protein level). In the placenta, where it is found in the amnion, a membranous tissue lining the amniotic cavity. Within the amnion, it is found in an acellular, relatively dense layer of a complex network of reticular fibers. Also located to a fibroblast layer beneath this dense layer. Exists in tissues in association with other types of collagen.

It localises to the secreted. It is found in the extracellular space. The protein localises to the extracellular matrix. Involved in mediating cell attachment and inducing integrin-mediated cellular reactions, such as cell spreading and alterations in cell morphology. This chain is Collagen alpha-1(XVI) chain (COL16A1), found in Homo sapiens (Human).